The chain runs to 303 residues: Methionyl-tRNA formyltransferase (303 aa).

(6S)-5,6,7,8-tetrahydrofolate is bound at residue 108-111; it reads SDLP.

Belongs to the Fmt family.

The enzyme catalyses L-methionyl-tRNA(fMet) + (6R)-10-formyltetrahydrofolate = N-formyl-L-methionyl-tRNA(fMet) + (6S)-5,6,7,8-tetrahydrofolate + H(+). In terms of biological role, attaches a formyl group to the free amino group of methionyl-tRNA(fMet). The formyl group appears to play a dual role in the initiator identity of N-formylmethionyl-tRNA by promoting its recognition by IF2 and preventing the misappropriation of this tRNA by the elongation apparatus. The chain is Methionyl-tRNA formyltransferase from Rickettsia prowazekii (strain Madrid E).